We begin with the raw amino-acid sequence, 144 residues long: Large ribosomal subunit protein uL13 (144 aa).

This sequence belongs to the universal ribosomal protein uL13 family. As to quaternary structure, part of the 50S ribosomal subunit.

Its function is as follows. This protein is one of the early assembly proteins of the 50S ribosomal subunit, although it is not seen to bind rRNA by itself. It is important during the early stages of 50S assembly. This Mycoplasma mobile (strain ATCC 43663 / 163K / NCTC 11711) (Mesomycoplasma mobile) protein is Large ribosomal subunit protein uL13.